The following is a 228-amino-acid chain: LexA repressor (228 aa).

The H-T-H motif DNA-binding region spans 28-48; sequence IREIGEALDIRSTNGVNDHLK. Catalysis depends on for autocatalytic cleavage activity residues S146 and K183.

The protein belongs to the peptidase S24 family. Homodimer.

The catalysed reaction is Hydrolysis of Ala-|-Gly bond in repressor LexA.. In terms of biological role, represses a number of genes involved in the response to DNA damage (SOS response), including recA and lexA. In the presence of single-stranded DNA, RecA interacts with LexA causing an autocatalytic cleavage which disrupts the DNA-binding part of LexA, leading to derepression of the SOS regulon and eventually DNA repair. The protein is LexA repressor of Anaeromyxobacter dehalogenans (strain 2CP-1 / ATCC BAA-258).